The sequence spans 896 residues: Translation initiation factor IF-2 (896 aa).

Positions 93-219 are enriched in basic and acidic residues; sequence VKRDPQEAER…RMAEENEKNW (127 aa). A disordered region spans residues 93 to 307; the sequence is VKRDPQEAER…GSALQQGFQK (215 aa). Residues 256–271 are compositionally biased toward basic residues; sequence GRSRSSKAARPAKKGN. Residues 272 to 285 are compositionally biased toward basic and acidic residues; it reads KHAESKADREEARA. The region spanning 395–564 is the tr-type G domain; that stretch reads PRAPVVTIMG…LLQAEVLELK (170 aa). The tract at residues 404-411 is G1; it reads GHVDHGKT. Position 404–411 (404–411) interacts with GTP; the sequence is GHVDHGKT. The G2 stretch occupies residues 429-433; the sequence is GITQH. Positions 450-453 are G3; the sequence is DTPG. Residues 450-454 and 504-507 contribute to the GTP site; these read DTPGH and NKID. Residues 504 to 507 form a G4 region; sequence NKID. Residues 540 to 542 form a G5 region; that stretch reads SAK.

It belongs to the TRAFAC class translation factor GTPase superfamily. Classic translation factor GTPase family. IF-2 subfamily.

It localises to the cytoplasm. Its function is as follows. One of the essential components for the initiation of protein synthesis. Protects formylmethionyl-tRNA from spontaneous hydrolysis and promotes its binding to the 30S ribosomal subunits. Also involved in the hydrolysis of GTP during the formation of the 70S ribosomal complex. In Klebsiella pneumoniae subsp. pneumoniae (strain ATCC 700721 / MGH 78578), this protein is Translation initiation factor IF-2.